The following is a 264-amino-acid chain: Hemin import ATP-binding protein HmuV (264 aa).

Positions 2–241 (IEVSGVSVRL…ETMLAVFGCA (240 aa)) constitute an ABC transporter domain. ATP is bound at residue 34–41 (GPNGSGKT).

The protein belongs to the ABC transporter superfamily. Heme (hemin) importer (TC 3.A.1.14.5) family. As to quaternary structure, the complex is composed of two ATP-binding proteins (HmuV), two transmembrane proteins (HmuU) and a solute-binding protein (HmuT).

The protein localises to the cell inner membrane. Part of the ABC transporter complex HmuTUV involved in hemin import. Responsible for energy coupling to the transport system. The sequence is that of Hemin import ATP-binding protein HmuV from Rhizobium johnstonii (strain DSM 114642 / LMG 32736 / 3841) (Rhizobium leguminosarum bv. viciae).